Reading from the N-terminus, the 205-residue chain is MSAGLPIRTATVTRNTNETQIVCSISLDHTPGVDQQIIDIQTGIGFLNHMLHAMAKHGNMSLTLHCKGDLEIDDHHTAEDCALALGEAFKLALGERRGIRRYGTGFAPLDEALSRAVLDISSRPYFCGDLPFTREKIGDLSTEMIPHVFESFATAAGVTLHVDCIRGVNNHHIAEASFKALALAIREAITRTGGNDVPSTKGVLL.

Belongs to the imidazoleglycerol-phosphate dehydratase family.

The catalysed reaction is D-erythro-1-(imidazol-4-yl)glycerol 3-phosphate = 3-(imidazol-4-yl)-2-oxopropyl phosphate + H2O. It functions in the pathway amino-acid biosynthesis; L-histidine biosynthesis; L-histidine from 5-phospho-alpha-D-ribose 1-diphosphate: step 6/9. The protein is Imidazoleglycerol-phosphate dehydratase (HIS3) of Phaffia rhodozyma (Yeast).